Consider the following 435-residue polypeptide: UDP-glucuronic acid decarboxylase 1 (435 aa).

The interval 1–33 (MKQLHKQMSSKRDEETIPMSQSSPYSPKTLKHP) is disordered. Topologically, residues 1 to 48 (MKQLHKQMSSKRDEETIPMSQSSPYSPKTLKHPRSLPRSLHYLFREQR) are cytoplasmic. A helical; Signal-anchor for type II membrane protein transmembrane segment spans residues 49–69 (LLFILVGILIGSTFFILQPSL). At 70 to 435 (SRLGAAESTS…ILNEDEGKGL (366 aa)) the chain is on the lumenal side. Over residues 91 to 100 (DSPPSRSTFN) the composition is skewed to polar residues. The interval 91 to 110 (DSPPSRSTFNSGGGGGRTGR) is disordered. Residues Gly-129, Phe-130, Val-131, Asp-150, Asn-151, Phe-153, Thr-154, Gly-155, Asp-175, and Val-176 each coordinate NAD(+). Ile-180 contributes to the UDP-alpha-D-glucuronate binding site. Leu-190 serves as a coordination point for NAD(+). Lys-208 is a binding site for UDP-alpha-D-glucuronate. NAD(+) is bound at residue Thr-209. UDP-alpha-D-glucuronate contacts are provided by Asn-216, Gly-219, Lys-222, and Arg-223. NAD(+) is bound by residues Tyr-262 and Lys-266. Tyr-262 functions as the Proton acceptor in the catalytic mechanism. Tyr-276 is a binding site for UDP-alpha-D-glucuronate. Residues Thr-292 and Arg-303 each coordinate NAD(+). A disordered region spans residues 380-401 (EFKPNTADDPHKRKPDISKAKE). The segment covering 385–401 (TADDPHKRKPDISKAKE) has biased composition (basic and acidic residues).

The protein belongs to the NAD(P)-dependent epimerase/dehydratase family. UDP-glucuronic acid decarboxylase subfamily. The cofactor is NAD(+). In terms of tissue distribution, ubiquitous.

It is found in the golgi apparatus. The protein localises to the golgi stack membrane. It catalyses the reaction UDP-alpha-D-glucuronate + H(+) = UDP-alpha-D-xylose + CO2. It participates in nucleotide-sugar biosynthesis; UDP-alpha-D-xylose biosynthesis; UDP-alpha-D-xylose from UDP-alpha-D-glucuronate: step 1/1. Catalyzes the NAD-dependent decarboxylation of UDP-glucuronic acid to UDP-xylose. Necessary for the biosynthesis of the core tetrasaccharide in glycosaminoglycan biosynthesis. The chain is UDP-glucuronic acid decarboxylase 1 from Arabidopsis thaliana (Mouse-ear cress).